The following is a 165-amino-acid chain: Chorismate pyruvate-lyase (165 aa).

Residues methionine 35, arginine 77, leucine 115, and glutamate 156 each contribute to the substrate site.

This sequence belongs to the UbiC family. As to quaternary structure, monomer.

The protein resides in the cytoplasm. The enzyme catalyses chorismate = 4-hydroxybenzoate + pyruvate. It functions in the pathway cofactor biosynthesis; ubiquinone biosynthesis. Removes the pyruvyl group from chorismate, with concomitant aromatization of the ring, to provide 4-hydroxybenzoate (4HB) for the ubiquinone pathway. This chain is Chorismate pyruvate-lyase, found in Salmonella enteritidis PT4 (strain P125109).